Consider the following 53-residue polypeptide: uncharacterized protein (53 aa).

A helical membrane pass occupies residues 24-44 (LMTFIAVNAVLSLILIRAVIL).

It localises to the membrane. This is an uncharacterized protein from Methanocaldococcus jannaschii (strain ATCC 43067 / DSM 2661 / JAL-1 / JCM 10045 / NBRC 100440) (Methanococcus jannaschii).